Here is a 456-residue protein sequence, read N- to C-terminus: Bifunctional protein GlmU (456 aa).

The pyrophosphorylase stretch occupies residues 1-229; sequence MTKKALSAVI…VMEVEGANNR (229 aa). UDP-N-acetyl-alpha-D-glucosamine contacts are provided by residues 11 to 14, K25, Q76, 81 to 82, 103 to 105, G140, E154, N169, and N227; these read LAAG, GT, and YGD. A Mg(2+)-binding site is contributed by D105. N227 lines the Mg(2+) pocket. Residues 230–250 form a linker region; that stretch reads LQLAALERYLQNKQASKLLLE. Positions 251–456 are N-acetyltransferase; sequence GVMIYDPARF…QGWQRPIKKK (206 aa). Residues R333 and K351 each coordinate UDP-N-acetyl-alpha-D-glucosamine. Catalysis depends on H363, which acts as the Proton acceptor. UDP-N-acetyl-alpha-D-glucosamine is bound by residues Y366 and N377. Acetyl-CoA-binding positions include A380, 386 to 387, S405, A423, and R440; that span reads NY.

It in the N-terminal section; belongs to the N-acetylglucosamine-1-phosphate uridyltransferase family. In the C-terminal section; belongs to the transferase hexapeptide repeat family. Homotrimer. The cofactor is Mg(2+).

It localises to the cytoplasm. It carries out the reaction alpha-D-glucosamine 1-phosphate + acetyl-CoA = N-acetyl-alpha-D-glucosamine 1-phosphate + CoA + H(+). It catalyses the reaction N-acetyl-alpha-D-glucosamine 1-phosphate + UTP + H(+) = UDP-N-acetyl-alpha-D-glucosamine + diphosphate. It functions in the pathway nucleotide-sugar biosynthesis; UDP-N-acetyl-alpha-D-glucosamine biosynthesis; N-acetyl-alpha-D-glucosamine 1-phosphate from alpha-D-glucosamine 6-phosphate (route II): step 2/2. Its pathway is nucleotide-sugar biosynthesis; UDP-N-acetyl-alpha-D-glucosamine biosynthesis; UDP-N-acetyl-alpha-D-glucosamine from N-acetyl-alpha-D-glucosamine 1-phosphate: step 1/1. The protein operates within bacterial outer membrane biogenesis; LPS lipid A biosynthesis. Its function is as follows. Catalyzes the last two sequential reactions in the de novo biosynthetic pathway for UDP-N-acetylglucosamine (UDP-GlcNAc). The C-terminal domain catalyzes the transfer of acetyl group from acetyl coenzyme A to glucosamine-1-phosphate (GlcN-1-P) to produce N-acetylglucosamine-1-phosphate (GlcNAc-1-P), which is converted into UDP-GlcNAc by the transfer of uridine 5-monophosphate (from uridine 5-triphosphate), a reaction catalyzed by the N-terminal domain. This is Bifunctional protein GlmU from Haemophilus influenzae (strain PittGG).